A 506-amino-acid polypeptide reads, in one-letter code: Lysine--tRNA ligase (506 aa).

Residues Glu415 and Glu422 each contribute to the Mg(2+) site.

This sequence belongs to the class-II aminoacyl-tRNA synthetase family. In terms of assembly, homodimer. Mg(2+) serves as cofactor.

The protein resides in the cytoplasm. The catalysed reaction is tRNA(Lys) + L-lysine + ATP = L-lysyl-tRNA(Lys) + AMP + diphosphate. The protein is Lysine--tRNA ligase of Erwinia tasmaniensis (strain DSM 17950 / CFBP 7177 / CIP 109463 / NCPPB 4357 / Et1/99).